The primary structure comprises 449 residues: Agmatine hydroxycinnamoyltransferase 1 (449 aa).

Active-site proton acceptor residues include H153 and D392.

This sequence belongs to the plant acyltransferase family. As to expression, highly expressed in roots. Expressed at low levels in flowers.

Its function is as follows. Hydroxycinnamoyl transferase that catalyzes the transfer of an acyl from p-coumaryol-CoA to agmatine, to produce coumaroyl agmatine. Can use feruloyl-CoA, caffeoyl-CoA and sinapoyl-CoA as acyl donors. Seems to be able to transfer the acyl group from p-coumaroyl-CoA and feruloyl-CoA to the acyl acceptors putrescine and spermidine. This chain is Agmatine hydroxycinnamoyltransferase 1, found in Oryza sativa subsp. japonica (Rice).